The chain runs to 444 residues: ATP-dependent protease ATPase subunit HslU (444 aa).

Residues Ile18, 60-65 (GVGKTE), Asp256, Glu321, and Arg393 contribute to the ATP site.

It belongs to the ClpX chaperone family. HslU subfamily. In terms of assembly, a double ring-shaped homohexamer of HslV is capped on each side by a ring-shaped HslU homohexamer. The assembly of the HslU/HslV complex is dependent on binding of ATP.

Its subcellular location is the cytoplasm. Its function is as follows. ATPase subunit of a proteasome-like degradation complex; this subunit has chaperone activity. The binding of ATP and its subsequent hydrolysis by HslU are essential for unfolding of protein substrates subsequently hydrolyzed by HslV. HslU recognizes the N-terminal part of its protein substrates and unfolds these before they are guided to HslV for hydrolysis. The protein is ATP-dependent protease ATPase subunit HslU of Buchnera aphidicola subsp. Baizongia pistaciae (strain Bp).